The sequence spans 474 residues: Carbohydrate sulfotransferase 3 (474 aa).

The Cytoplasmic portion of the chain corresponds to 1–19 (MEKGLALPQDCRDLVHNLK). The helical; Signal-anchor for type II membrane protein transmembrane segment at 20-38 (IRGRYVLFLAFVVIVFIFI) threads the bilayer. Over 39–474 (EKENKIISRV…LEERGTFWVT (436 aa)) the chain is Lumenal. 3 N-linked (GlcNAc...) asparagine glycosylation sites follow: Asn-63, Asn-74, and Asn-96. 137 to 143 (TRTGSSF) lines the 3'-phosphoadenylyl sulfate pocket. Asn-252 carries an N-linked (GlcNAc...) asparagine glycan. 297 to 305 (RDPRAVLAS) is a binding site for 3'-phosphoadenylyl sulfate. Asn-415 and Asn-459 each carry an N-linked (GlcNAc...) asparagine glycan.

Belongs to the sulfotransferase 1 family. Gal/GlcNAc/GalNAc subfamily. Post-translationally, N-glycosylated.

It localises to the golgi apparatus membrane. The enzyme catalyses chondroitin beta-D-glucuronate + n 3'-phosphoadenylyl sulfate = chondroitin 6'-sulfate + n adenosine 3',5'-bisphosphate + n H(+). It catalyses the reaction 3'-phosphoadenylyl sulfate + keratan = adenosine 3',5'-bisphosphate + keratan 6'-sulfate.. Sulfotransferase that utilizes 3'-phospho-5'-adenylyl sulfate (PAPS) as sulfonate donor to catalyze the transfer of sulfate to position 6 of the N-acetylgalactosamine (GalNAc) residue of chondroitin. Chondroitin sulfate constitutes the predominant proteoglycan present in cartilage and is distributed on the surfaces of many cells and extracellular matrices. Catalyzes with a lower efficiency the sulfation of Gal residues of keratan sulfate, another glycosaminoglycan. Can also catalyze the sulfation of the Gal residues in sialyl N-acetyllactosamine (sialyl LacNAc) oligosaccharides. May play a role in the maintenance of naive T-lymphocytes in the spleen. In Rattus norvegicus (Rat), this protein is Carbohydrate sulfotransferase 3 (Chst3).